The following is a 362-amino-acid chain: NAD(P)H-quinone oxidoreductase subunit 1, chloroplastic (362 aa).

8 helical membrane passes run 31–51 (WVPL…LVIV), 99–119 (WLFT…YLVV), 132–152 (IGIF…LMSG), 178–198 (LAIC…VDIV), 206–226 (ILTW…IAAL), 268–288 (LVSG…PFAI), 303–323 (AFLG…AAIL), and 336–356 (LLDL…LLTA).

The protein belongs to the complex I subunit 1 family. In terms of assembly, NDH is composed of at least 16 different subunits, 5 of which are encoded in the nucleus.

The protein localises to the plastid. It localises to the chloroplast thylakoid membrane. It carries out the reaction a plastoquinone + NADH + (n+1) H(+)(in) = a plastoquinol + NAD(+) + n H(+)(out). It catalyses the reaction a plastoquinone + NADPH + (n+1) H(+)(in) = a plastoquinol + NADP(+) + n H(+)(out). In terms of biological role, NDH shuttles electrons from NAD(P)H:plastoquinone, via FMN and iron-sulfur (Fe-S) centers, to quinones in the photosynthetic chain and possibly in a chloroplast respiratory chain. The immediate electron acceptor for the enzyme in this species is believed to be plastoquinone. Couples the redox reaction to proton translocation, and thus conserves the redox energy in a proton gradient. The protein is NAD(P)H-quinone oxidoreductase subunit 1, chloroplastic of Nephroselmis olivacea (Green alga).